The following is a 367-amino-acid chain: Heparan sulfate glucosamine 3-O-sulfotransferase 2 (367 aa).

Topologically, residues 1–19 (MAYRVLGRAGPPQPRRARR) are cytoplasmic. A helical; Signal-anchor for type II membrane protein membrane pass occupies residues 20–39 (LLFAFTLSLSCTYLCYSFLC). Topologically, residues 40–367 (CCDGLGQSRL…ETVGQDFRWE (328 aa)) are lumenal. Positions 66-115 (LLAKSRPCDPPGPTPSEPSAPSAPAAAAPAPRLSGSNHSGSPKPGTKRLP) are disordered. A compositionally biased stretch (pro residues) spans 73–83 (CDPPGPTPSEP). Over residues 84–96 (SAPSAPAAAAPAP) the composition is skewed to low complexity. N102 carries an N-linked (GlcNAc...) asparagine glycan. Residue 124–128 (KGGTR) coordinates 3'-phosphoadenylyl sulfate. Substrate is bound by residues 146–152 (EPHFFDR) and 177–180 (KTPS). N-linked (GlcNAc...) asparagine glycosylation occurs at N193. 3'-phosphoadenylyl sulfate-binding residues include R205 and S213. N235 carries N-linked (GlcNAc...) asparagine glycosylation. 245 to 246 (WN) contacts substrate. An N-linked (GlcNAc...) asparagine glycan is attached at N306. Cysteines 313 and 325 form a disulfide. Position 330 to 334 (330 to 334 (KGRTH)) interacts with 3'-phosphoadenylyl sulfate.

Belongs to the sulfotransferase 1 family.

It localises to the golgi apparatus membrane. It carries out the reaction alpha-D-glucosaminyl-[heparan sulfate](n) + 3'-phosphoadenylyl sulfate = 3-sulfo-alpha-D-glucosaminyl-[heparan sulfate](n) + adenosine 3',5'-bisphosphate + H(+). Sulfotransferase that utilizes 3'-phospho-5'-adenylyl sulfate (PAPS) to catalyze the transfer of a sulfo group to an N-unsubstituted glucosamine linked to a 2-O-sulfo iduronic acid unit on heparan sulfate. Catalyzes the O-sulfation of glucosamine in GlcA2S-GlcNS. Unlike HS3ST1/3-OST-1, does not convert non-anticoagulant heparan sulfate to anticoagulant heparan sulfate. This chain is Heparan sulfate glucosamine 3-O-sulfotransferase 2 (Hs3st2), found in Mus musculus (Mouse).